Here is a 91-residue protein sequence, read N- to C-terminus: UPF0250 protein NMA1380 (91 aa).

It belongs to the UPF0250 family.

The sequence is that of UPF0250 protein NMA1380 from Neisseria meningitidis serogroup A / serotype 4A (strain DSM 15465 / Z2491).